A 320-amino-acid chain; its full sequence is Formimidoylglutamase (320 aa).

Positions 125, 153, 155, 157, 244, and 246 each coordinate Mn(2+).

It belongs to the arginase family. Requires Mn(2+) as cofactor.

It catalyses the reaction N-formimidoyl-L-glutamate + H2O = formamide + L-glutamate. The protein operates within amino-acid degradation; L-histidine degradation into L-glutamate; L-glutamate from N-formimidoyl-L-glutamate (hydrolase route): step 1/1. Its function is as follows. Catalyzes the conversion of N-formimidoyl-L-glutamate to L-glutamate and formamide. The protein is Formimidoylglutamase of Rhodococcus jostii (strain RHA1).